A 379-amino-acid polypeptide reads, in one-letter code: Flagellar P-ring protein (379 aa).

Residues 1–32 (MTAPAGFLPRVGRLIAVALTAVFLLAPTGAEA) form the signal peptide.

This sequence belongs to the FlgI family. In terms of assembly, the basal body constitutes a major portion of the flagellar organelle and consists of four rings (L,P,S, and M) mounted on a central rod.

The protein resides in the periplasm. It is found in the bacterial flagellum basal body. Functionally, assembles around the rod to form the L-ring and probably protects the motor/basal body from shearing forces during rotation. The chain is Flagellar P-ring protein from Rhodospirillum rubrum (strain ATCC 11170 / ATH 1.1.1 / DSM 467 / LMG 4362 / NCIMB 8255 / S1).